A 137-amino-acid chain; its full sequence is Large ribosomal subunit protein uL16 (137 aa).

This sequence belongs to the universal ribosomal protein uL16 family. Part of the 50S ribosomal subunit.

Functionally, binds 23S rRNA and is also seen to make contacts with the A and possibly P site tRNAs. This is Large ribosomal subunit protein uL16 from Pseudomonas putida (strain ATCC 47054 / DSM 6125 / CFBP 8728 / NCIMB 11950 / KT2440).